The primary structure comprises 552 residues: E3 ubiquitin-protein ligase MGRN1 (552 aa).

The N-myristoyl glycine moiety is linked to residue G2. Residues 278–317 form an RING-type zinc finger; sequence CVVCLSDLRDTLILPCRHLCLCTSCADTLRYQANNCPICR. Positions 355–384 are disordered; sequence SCPFKKSKPHPASLASKKPKRETNSDSVPP. The short motif at 406 to 409 is the Required for TSG101-binding element; it reads PSAP. Y411 is subject to Phosphotyrosine. The tract at residues 439–552 is disordered; sequence SSRQKGRPQS…PDSCSVGIDE (114 aa). The segment covering 450–460 has biased composition (polar residues); the sequence is APDSTLRSPSS. Over residues 464-475 the composition is skewed to acidic residues; it reads EEDEEKLSEDVD. S471 bears the Phosphoserine mark. Residues 504–523 are compositionally biased toward polar residues; sequence SSSPQQGTRAASIENVLQDS. S524 carries the phosphoserine modification.

Interacts with MC1R and MC4R, but not with TBXA2R. Interacts with TSG101. Interacts with mislocalized cytosolically exposed PRNP; this interaction alters MGRN1 subcellular location and causes lysosomal enlargement. In terms of processing, autoubiquitinated in vitro.

Its subcellular location is the early endosome. It localises to the cytoplasm. The protein localises to the cytosol. The protein resides in the nucleus. It is found in the cell membrane. It catalyses the reaction S-ubiquitinyl-[E2 ubiquitin-conjugating enzyme]-L-cysteine + [acceptor protein]-L-lysine = [E2 ubiquitin-conjugating enzyme]-L-cysteine + N(6)-ubiquitinyl-[acceptor protein]-L-lysine.. Its pathway is protein modification; protein ubiquitination. Functionally, E3 ubiquitin-protein ligase. Mediates monoubiquitination at multiple sites of TSG101 in the presence of UBE2D1, but not of UBE2G1, nor UBE2H. Plays a role in the regulation of endosome-to-lysosome trafficking. Impairs MC1R- and MC4R-signaling by competing with GNAS-binding to MCRs and inhibiting agonist-induced cAMP production. Does not inhibit ADRB2-signaling. Does not promote MC1R ubiquitination. Acts also as a negative regulator of hedgehog signaling. The sequence is that of E3 ubiquitin-protein ligase MGRN1 (MGRN1) from Homo sapiens (Human).